The chain runs to 401 residues: S-adenosylmethionine synthase (401 aa).

An ATP-binding site is contributed by H16. Position 18 (D18) interacts with Mg(2+). A K(+)-binding site is contributed by E44. Residues E57 and Q100 each contribute to the L-methionine site. The segment at 100–110 (QSPDIAQGVNE) is flexible loop. Residues 174–176 (DAK), 241–242 (RF), D250, 256–257 (RK), A273, and K277 each bind ATP. D250 is an L-methionine binding site. An L-methionine-binding site is contributed by K281.

Belongs to the AdoMet synthase family. In terms of assembly, homotetramer; dimer of dimers. It depends on Mg(2+) as a cofactor. K(+) serves as cofactor.

It is found in the cytoplasm. It carries out the reaction L-methionine + ATP + H2O = S-adenosyl-L-methionine + phosphate + diphosphate. Its pathway is amino-acid biosynthesis; S-adenosyl-L-methionine biosynthesis; S-adenosyl-L-methionine from L-methionine: step 1/1. Its function is as follows. Catalyzes the formation of S-adenosylmethionine (AdoMet) from methionine and ATP. The overall synthetic reaction is composed of two sequential steps, AdoMet formation and the subsequent tripolyphosphate hydrolysis which occurs prior to release of AdoMet from the enzyme. This Streptococcus equi subsp. zooepidemicus (strain MGCS10565) protein is S-adenosylmethionine synthase.